We begin with the raw amino-acid sequence, 234 residues long: Leucyl/phenylalanyl-tRNA--protein transferase (234 aa).

Belongs to the L/F-transferase family.

Its subcellular location is the cytoplasm. It carries out the reaction N-terminal L-lysyl-[protein] + L-leucyl-tRNA(Leu) = N-terminal L-leucyl-L-lysyl-[protein] + tRNA(Leu) + H(+). The enzyme catalyses N-terminal L-arginyl-[protein] + L-leucyl-tRNA(Leu) = N-terminal L-leucyl-L-arginyl-[protein] + tRNA(Leu) + H(+). It catalyses the reaction L-phenylalanyl-tRNA(Phe) + an N-terminal L-alpha-aminoacyl-[protein] = an N-terminal L-phenylalanyl-L-alpha-aminoacyl-[protein] + tRNA(Phe). Its function is as follows. Functions in the N-end rule pathway of protein degradation where it conjugates Leu, Phe and, less efficiently, Met from aminoacyl-tRNAs to the N-termini of proteins containing an N-terminal arginine or lysine. The chain is Leucyl/phenylalanyl-tRNA--protein transferase from Escherichia coli O7:K1 (strain IAI39 / ExPEC).